The following is a 479-amino-acid chain: Flap endonuclease 1 (479 aa).

Residues 1–106 form an N-domain region; sequence MGIKGLTKFI…SELEKRGEKR (106 aa). Asp-34 lines the Mg(2+) pocket. DNA contacts are provided by Arg-47 and Arg-72. Mg(2+)-binding residues include Asp-88, Glu-160, Glu-162, Asp-181, and Asp-183. The I-domain stretch occupies residues 124-266; the sequence is EIKKQSGRTV…KTAYNLIKEY (143 aa). Residue Glu-160 participates in DNA binding. 2 residues coordinate DNA: Gly-244 and Asp-246. Asp-246 provides a ligand contact to Mg(2+). Positions 349 to 357 are interaction with PCNA; the sequence is TQRRLDTFF. A disordered region spans residues 379 to 455; the sequence is AKGKGKKREL…NSDSGNIKNE (77 aa). Basic and acidic residues predominate over residues 403–428; it reads NIKDEKKNTDKMDELKNKSDENFVKD.

This sequence belongs to the XPG/RAD2 endonuclease family. FEN1 subfamily. In terms of assembly, interacts with PCNA. Three molecules of FEN1 bind to one PCNA trimer with each molecule binding to one PCNA monomer. PCNA stimulates the nuclease activity without altering cleavage specificity. It depends on Mg(2+) as a cofactor. Post-translationally, phosphorylated. Phosphorylation upon DNA damage induces relocalization to the nuclear plasma.

The protein localises to the nucleus. It is found in the nucleolus. Its subcellular location is the nucleoplasm. The protein resides in the mitochondrion. Functionally, structure-specific nuclease with 5'-flap endonuclease and 5'-3' exonuclease activities involved in DNA replication and repair. During DNA replication, cleaves the 5'-overhanging flap structure that is generated by displacement synthesis when DNA polymerase encounters the 5'-end of a downstream Okazaki fragment. It enters the flap from the 5'-end and then tracks to cleave the flap base, leaving a nick for ligation. Also involved in the long patch base excision repair (LP-BER) pathway, by cleaving within the apurinic/apyrimidinic (AP) site-terminated flap. Acts as a genome stabilization factor that prevents flaps from equilibrating into structures that lead to duplications and deletions. Also possesses 5'-3' exonuclease activity on nicked or gapped double-stranded DNA, and exhibits RNase H activity. Also involved in replication and repair of rDNA and in repairing mitochondrial DNA. The protein is Flap endonuclease 1 of Plasmodium chabaudi chabaudi.